The primary structure comprises 184 residues: Ribosome maturation factor RimM (184 aa).

A PRC barrel domain is found at 101–174; it reads PDEYYDHQLV…RVVIADRPGL (74 aa).

It belongs to the RimM family. As to quaternary structure, binds ribosomal protein uS19.

The protein localises to the cytoplasm. Its function is as follows. An accessory protein needed during the final step in the assembly of 30S ribosomal subunit, possibly for assembly of the head region. Essential for efficient processing of 16S rRNA. May be needed both before and after RbfA during the maturation of 16S rRNA. It has affinity for free ribosomal 30S subunits but not for 70S ribosomes. This is Ribosome maturation factor RimM from Nocardioides sp. (strain ATCC BAA-499 / JS614).